Here is a 1369-residue protein sequence, read N- to C-terminus: Neurofascin (1369 aa).

A signal peptide spans 1-25; the sequence is MVLHSHQLTYAGIAFALCLHHLISA. Over 26–1235 the chain is Extracellular; sequence IEVPLDSNIQ…NHVDIATQGW (1210 aa). Ig-like C2-type domains are found at residues 42-138 and 144-231; these read PTIT…LQVS and PKEK…NPYT. 2 cysteine pairs are disulfide-bonded: cysteine 64–cysteine 119 and cysteine 163–cysteine 214. 3 N-linked (GlcNAc...) asparagine glycosylation sites follow: asparagine 241, asparagine 247, and asparagine 323. 4 consecutive Ig-like C2-type domains span residues 262–350, 355–442, 448–535, and 539–626; these read PSFM…ISVR, PYWL…AFVS, PRIL…VRLE, and PTRI…AYLT. 2 disulfides stabilise this stretch: cysteine 286–cysteine 334 and cysteine 376–cysteine 426. Asparagine 427, asparagine 464, and asparagine 501 each carry an N-linked (GlcNAc...) asparagine glycan. Disulfide bonds link cysteine 470/cysteine 519 and cysteine 561/cysteine 610. Fibronectin type-III domains follow at residues 645–740, 745–838, 843–945, and 949–1057; these read RPRD…TSGA, NPTG…SGED, APTD…TPEG, and SPRY…TPAS. An N-linked (GlcNAc...) asparagine glycan is attached at asparagine 692. Residues 730–739 are compositionally biased toward polar residues; that stretch reads MPSERYQTSG. The interval 730–753 is disordered; the sequence is MPSERYQTSGARPEINPTGVQGAG. Asparagine 767, asparagine 793, asparagine 853, asparagine 994, and asparagine 1009 each carry an N-linked (GlcNAc...) asparagine glycan. Residues 1078–1097 are disordered; the sequence is TTATPTTETPPTEIPTTAIP. Asparagine 1133, asparagine 1150, asparagine 1156, and asparagine 1171 each carry an N-linked (GlcNAc...) asparagine glycan. The Fibronectin type-III 5 domain occupies 1133–1222; the sequence is NGSSIWDIRA…SYITFTTSSA (90 aa). The chain crosses the membrane as a helical span at residues 1236–1256; sequence FIGLMCAIALLVLILLIVCFI. Topologically, residues 1257–1369 are cytoplasmic; sequence KRSRGGKYPV…SPVNAIYSLA (113 aa). Composition is skewed to basic and acidic residues over residues 1266-1282 and 1289-1298; these read VRDN…KNVE and RSLESDEDNK. The disordered stretch occupies residues 1266–1369; sequence VRDNKDEHLN…SPVNAIYSLA (104 aa). A compositionally biased stretch (polar residues) spans 1300–1313; it reads LPNSQTSLDGTIKQ.

It belongs to the immunoglobulin superfamily. L1/neurofascin/NgCAM family. In terms of processing, N-glycosylated and O-glycosylated. May be proteolytically cleaved at Arg-636.

The protein resides in the cell membrane. Cell adhesion, ankyrin-binding protein which may be involved in neurite extension, axonal guidance, synaptogenesis, myelination and neuron-glial cell interactions. This Gallus gallus (Chicken) protein is Neurofascin (NFASC).